The primary structure comprises 265 residues: Methylthioribulose-1-phosphate dehydratase (265 aa).

Cys-118 serves as a coordination point for substrate. Zn(2+) contacts are provided by His-136 and His-138. Residue Glu-161 is the Proton donor/acceptor of the active site. His-226 contributes to the Zn(2+) binding site.

The protein belongs to the aldolase class II family. MtnB subfamily. Zn(2+) is required as a cofactor.

It is found in the cytoplasm. It carries out the reaction 5-(methylsulfanyl)-D-ribulose 1-phosphate = 5-methylsulfanyl-2,3-dioxopentyl phosphate + H2O. It participates in amino-acid biosynthesis; L-methionine biosynthesis via salvage pathway; L-methionine from S-methyl-5-thio-alpha-D-ribose 1-phosphate: step 2/6. In terms of biological role, catalyzes the dehydration of methylthioribulose-1-phosphate (MTRu-1-P) into 2,3-diketo-5-methylthiopentyl-1-phosphate (DK-MTP-1-P). The polypeptide is Methylthioribulose-1-phosphate dehydratase (Scheffersomyces stipitis (strain ATCC 58785 / CBS 6054 / NBRC 10063 / NRRL Y-11545) (Yeast)).